The primary structure comprises 118 residues: T cell receptor gamma variable 8 (118 aa).

An N-terminal signal peptide occupies residues 1–17 (MLLALALLLAFLPPASQ). The Ig-like domain maps to 18–118 (KSSNLEGRTK…GVYYCATWDR (101 aa)). Cys-41 and Cys-113 are disulfide-bonded.

As to quaternary structure, gamma-delta TR is a heterodimer composed of a gamma and delta chain; disulfide-linked. The gamma-delta TR is associated with the transmembrane signaling CD3 coreceptor proteins following the stoichiometry: a single gamma-delta TR heterodimer associates with one CD3D-CD3E heterodimer, one CD3G-CD3E heterodimer and one CD247 homodimer forming a stable octameric structure. Upon activation, gamma-delta TR complex associates with FCER1G to initiate intracellular signaling.

It localises to the cell membrane. In terms of biological role, v region of the variable domain of T cell receptor (TR) gamma chain that participates in the antigen recognition. Gamma-delta TRs recognize a variety of self and foreign non-peptide antigens frequently expressed at the epithelial boundaries between the host and external environment, including endogenous lipids presented by MH-like protein CD1D and phosphoantigens presented by butyrophilin-like molecule BTN3A1. Upon antigen recognition induces rapid, innate-like immune responses involved in pathogen clearance and tissue repair. Binding of gamma-delta TR complex to antigen triggers phosphorylation of immunoreceptor tyrosine-based activation motifs (ITAMs) in the CD3 chains by the LCK and FYN kinases, allowing the recruitment, phosphorylation, and activation of ZAP70 that facilitates phosphorylation of the scaffolding proteins LCP2 and LAT. This lead to the formation of a supramolecular signalosome that recruits the phospholipase PLCG1, resulting in calcium mobilization and ERK activation, ultimately leading to T cell expansion and differentiation into effector cells. Gamma-delta TRs are produced through somatic rearrangement of a limited repertoire of variable (V), diversity (D), and joining (J) genes. The potential diversity of gamma-delta TRs is conferred by the unique ability to rearrange (D) genes in tandem and to utilize all three reading frames. The combinatorial diversity is considerably increased by the sequence exonuclease trimming and random nucleotide (N) region additions which occur during the V-(D)-J rearrangements. The chain is T cell receptor gamma variable 8 from Homo sapiens (Human).